A 143-amino-acid polypeptide reads, in one-letter code: 3-hydroxyacyl-[acyl-carrier-protein] dehydratase FabZ (143 aa).

The active site involves H49.

It belongs to the thioester dehydratase family. FabZ subfamily.

Its subcellular location is the cytoplasm. It carries out the reaction a (3R)-hydroxyacyl-[ACP] = a (2E)-enoyl-[ACP] + H2O. Functionally, involved in unsaturated fatty acids biosynthesis. Catalyzes the dehydration of short chain beta-hydroxyacyl-ACPs and long chain saturated and unsaturated beta-hydroxyacyl-ACPs. The polypeptide is 3-hydroxyacyl-[acyl-carrier-protein] dehydratase FabZ (Wolbachia pipientis subsp. Culex pipiens (strain wPip)).